A 689-amino-acid polypeptide reads, in one-letter code: Glycine--tRNA ligase beta subunit (689 aa).

The protein belongs to the class-II aminoacyl-tRNA synthetase family. As to quaternary structure, tetramer of two alpha and two beta subunits.

It is found in the cytoplasm. It catalyses the reaction tRNA(Gly) + glycine + ATP = glycyl-tRNA(Gly) + AMP + diphosphate. This Salmonella typhi protein is Glycine--tRNA ligase beta subunit.